The chain runs to 295 residues: Ribosomal RNA small subunit methyltransferase A (295 aa).

Residues Asn-28, Leu-30, Gly-55, Glu-76, Asp-101, and Asn-131 each contribute to the S-adenosyl-L-methionine site.

This sequence belongs to the class I-like SAM-binding methyltransferase superfamily. rRNA adenine N(6)-methyltransferase family. RsmA subfamily.

The protein resides in the cytoplasm. The catalysed reaction is adenosine(1518)/adenosine(1519) in 16S rRNA + 4 S-adenosyl-L-methionine = N(6)-dimethyladenosine(1518)/N(6)-dimethyladenosine(1519) in 16S rRNA + 4 S-adenosyl-L-homocysteine + 4 H(+). In terms of biological role, specifically dimethylates two adjacent adenosines (A1518 and A1519) in the loop of a conserved hairpin near the 3'-end of 16S rRNA in the 30S particle. May play a critical role in biogenesis of 30S subunits. In Pelotomaculum thermopropionicum (strain DSM 13744 / JCM 10971 / SI), this protein is Ribosomal RNA small subunit methyltransferase A.